The following is a 171-amino-acid chain: Nicotinamide-nucleotide adenylyltransferase (171 aa).

Belongs to the archaeal NMN adenylyltransferase family.

Its subcellular location is the cytoplasm. The enzyme catalyses beta-nicotinamide D-ribonucleotide + ATP + H(+) = diphosphate + NAD(+). Its pathway is cofactor biosynthesis; NAD(+) biosynthesis; NAD(+) from nicotinamide D-ribonucleotide: step 1/1. The protein is Nicotinamide-nucleotide adenylyltransferase of Methanococcus maripaludis (strain C5 / ATCC BAA-1333).